The chain runs to 146 residues: Large ribosomal subunit protein uL15 (146 aa).

The disordered stretch occupies residues 1–59; that stretch reads MRLEELKAPAGANKRTKRVGRGTGSGHGKTSTRGHKGQKSRSGGGVRPGFEGGQMPLQR. The segment covering 30–39 has biased composition (basic residues); sequence TSTRGHKGQK. Positions 42–52 are enriched in gly residues; that stretch reads SGGGVRPGFEG.

The protein belongs to the universal ribosomal protein uL15 family. Part of the 50S ribosomal subunit.

In terms of biological role, binds to the 23S rRNA. In Syntrophomonas wolfei subsp. wolfei (strain DSM 2245B / Goettingen), this protein is Large ribosomal subunit protein uL15.